The chain runs to 299 residues: Oxygen-dependent coproporphyrinogen-III oxidase (299 aa).

S92 contacts substrate. Residues H96 and H106 each coordinate a divalent metal cation. The Proton donor role is filled by H106. Residue 108–110 (NVR) participates in substrate binding. H145 and H175 together coordinate a divalent metal cation. The segment at 240 to 275 (YVEFNLVWDRGTLFGLQTGGRTESILMSMPPLVRWE) is important for dimerization. Residue 258 to 260 (GGR) coordinates substrate.

It belongs to the aerobic coproporphyrinogen-III oxidase family. In terms of assembly, homodimer. Requires a divalent metal cation as cofactor.

The protein localises to the cytoplasm. It carries out the reaction coproporphyrinogen III + O2 + 2 H(+) = protoporphyrinogen IX + 2 CO2 + 2 H2O. The protein operates within porphyrin-containing compound metabolism; protoporphyrin-IX biosynthesis; protoporphyrinogen-IX from coproporphyrinogen-III (O2 route): step 1/1. Functionally, involved in the heme biosynthesis. Catalyzes the aerobic oxidative decarboxylation of propionate groups of rings A and B of coproporphyrinogen-III to yield the vinyl groups in protoporphyrinogen-IX. This is Oxygen-dependent coproporphyrinogen-III oxidase from Salmonella paratyphi B (strain ATCC BAA-1250 / SPB7).